The primary structure comprises 113 residues: MNIIETLEKEQLRTDIPDFRPGDTVRVHVKVVEGNRERIQIFEGVVIGRRGRGINETFTVRRVSYGVAVERIFPLHSPRLERIEVVRHGKVRRAKLYYLRERVGKAARIKEER.

Belongs to the bacterial ribosomal protein bL19 family.

This protein is located at the 30S-50S ribosomal subunit interface and may play a role in the structure and function of the aminoacyl-tRNA binding site. This chain is Large ribosomal subunit protein bL19, found in Moorella thermoacetica (strain ATCC 39073 / JCM 9320).